The sequence spans 423 residues: Core protease OPG082 (423 aa).

Catalysis depends on residues His241, Asp248, and Cys328.

The protein belongs to the peptidase C57 family.

The protein resides in the virion. In terms of biological role, late protein responsible for processing most or all of the viral core and membrane proteins known to undergo morphogenesis-associated proteolysis. These proteolytic events are involved in the transformation of immature virions (IV) into mature virions (MV). Probably cleaves at least the OPG129, OPG136, OPG098, and OPG144 precursors preferentially at Ala-Gly-|-Ala motifs. Also seems to process Ala-Gly-|-Ser and Ala-Gly-|-Thr motifs. In Homo sapiens (Human), this protein is Core protease OPG082 (OPG083).